Reading from the N-terminus, the 354-residue chain is Uroporphyrinogen decarboxylase (354 aa).

Residues 27-31 (RQAGR), Asp77, Tyr154, Ser209, and His327 contribute to the substrate site.

This sequence belongs to the uroporphyrinogen decarboxylase family. Homodimer.

The protein localises to the cytoplasm. It carries out the reaction uroporphyrinogen III + 4 H(+) = coproporphyrinogen III + 4 CO2. It participates in porphyrin-containing compound metabolism; protoporphyrin-IX biosynthesis; coproporphyrinogen-III from 5-aminolevulinate: step 4/4. Its function is as follows. Catalyzes the decarboxylation of four acetate groups of uroporphyrinogen-III to yield coproporphyrinogen-III. The chain is Uroporphyrinogen decarboxylase from Pseudomonas syringae pv. syringae (strain B728a).